Reading from the N-terminus, the 431-residue chain is Glycerol-3-phosphate dehydrogenase [NAD(P)+] (431 aa).

NADPH-binding residues include serine 79, phenylalanine 80, arginine 100, and lysine 173. 2 residues coordinate sn-glycerol 3-phosphate: lysine 173 and glycine 201. Position 205 (alanine 205) interacts with NADPH. Positions 256, 309, 319, 320, and 321 each coordinate sn-glycerol 3-phosphate. The active-site Proton acceptor is the lysine 256. Arginine 320 is an NADPH binding site. Glutamate 346 lines the NADPH pocket.

This sequence belongs to the NAD-dependent glycerol-3-phosphate dehydrogenase family.

It is found in the cytoplasm. It carries out the reaction sn-glycerol 3-phosphate + NAD(+) = dihydroxyacetone phosphate + NADH + H(+). It catalyses the reaction sn-glycerol 3-phosphate + NADP(+) = dihydroxyacetone phosphate + NADPH + H(+). The protein operates within membrane lipid metabolism; glycerophospholipid metabolism. In terms of biological role, catalyzes the reduction of the glycolytic intermediate dihydroxyacetone phosphate (DHAP) to sn-glycerol 3-phosphate (G3P), the key precursor for phospholipid synthesis. The sequence is that of Glycerol-3-phosphate dehydrogenase [NAD(P)+] from Psychrobacter cryohalolentis (strain ATCC BAA-1226 / DSM 17306 / VKM B-2378 / K5).